A 132-amino-acid chain; its full sequence is Intraflagellar transport protein 20 homolog (132 aa).

Residues 70-132 (MKAIGARNLL…EFIDQFIFQK (63 aa)) form an IFT57-binding region. Positions 74-114 (GARNLLKSIAKQREAQQQQLQALIAEKKMQLERYRVEYEAL) form a coiled coil.

Component of the IFT complex B, at least composed of IFT20, IFT22, IFT25, IFT27, IFT46, IFT52, TRAF3IP1/IFT54, IFT57, IFT74, IFT80, IFT81, and IFT88. Interacts directly with IFT57 and KIF3B/Kinesin II subunit. Interacts with IFT88. Interacts with CEP83. Interacts with SPEF2 (via C-terminus). Interacts with CBL and CBLB. Interacts with TRIP11. Interacts with TTC21A. Interacts with SPATA1. Interacts with USH1G. Interacts with CCDC146. Interacts with CEP78; regulating IFT20 stability and localization. In terms of tissue distribution, expressed in almost all tissues.

It localises to the golgi apparatus. Its subcellular location is the cis-Golgi network. The protein localises to the cytoplasm. The protein resides in the cytoskeleton. It is found in the microtubule organizing center. It localises to the centrosome. Its subcellular location is the centriole. The protein localises to the cilium basal body. The protein resides in the cell projection. It is found in the cilium. It localises to the cytoplasmic vesicle. Its subcellular location is the secretory vesicle. The protein localises to the acrosome. Functionally, part of intraflagellar transport (IFT) particles involved in ciliary process assembly. May play a role in the trafficking of ciliary membrane proteins from the Golgi complex to the cilium. Regulates the platelet-derived growth factor receptor-alpha (PDGFRA) signaling pathway. Required for protein stability of E3 ubiquitin ligases CBL and CBLB that mediate ubiquitination and internalization of PDGFRA for proper feedback inhibition of PDGFRA signaling. Essential for male fertility. Plays an important role in spermatogenesis, particularly spermiogenesis, when germ cells form flagella. May play a role in the transport of flagellar proteins ODF2 and SPAG16 to build sperm flagella and in the removal of redundant sperm cytoplasm. Also involved in autophagy since it is required for trafficking of ATG16L and the expansion of the autophagic compartment. This chain is Intraflagellar transport protein 20 homolog (IFT20), found in Homo sapiens (Human).